A 353-amino-acid polypeptide reads, in one-letter code: MDYKSSLIQDGNPMENLEKQLICPICLEMFTKPVVILPCQHNLCRKCANDIFQAANPYWTSRGSSVSMSGGRFRCPTCRHEVIMDRHGVYGLQRNLLVENIIDIYKQECSSRPLQKGSHPMCKEHEDEKINIYCLTCEVPTCSMCKVFGIHKACEVAPLQSVFQGQKTELNNCISMLVAGNDRVQTIITQLEDSRRVTKENSHQVKEELSQKFDTLYAILDEKKSELLQRITQEQEKKLSFIEALIQQYQEQLDKSTKLVETAIQSLDEPGGATFLLTAKQLIKSIVEASKGCQLGKTEQGFENMDFFTLDLEHIADALRAIDFGTDEEEEEFIEEEDQEEEESTEGKEEGHQ.

The segment at 23 to 79 (CPICLEMFTKPVVILPCQHNLCRKCANDIFQAANPYWTSRGSSVSMSGGRFRCPTCR) adopts an RING-type zinc-finger fold. The tract at residues 74–218 (RCPTCRHEVI…LSQKFDTLYA (145 aa)) is interaction with TTN. Residues 117–159 (GSHPMCKEHEDEKINIYCLTCEVPTCSMCKVFGIHKACEVAPL) form a B box-type zinc finger. Zn(2+)-binding residues include cysteine 122, histidine 125, cysteine 145, and histidine 151. Residues 207-269 (EELSQKFDTL…VETAIQSLDE (63 aa)) adopt a coiled-coil conformation. One can recognise a COS domain in the interval 267-325 (LDEPGGATFLLTAKQLIKSIVEASKGCQLGKTEQGFENMDFFTLDLEHIADALRAIDFG). Residues 326–344 (TDEEEEEFIEEEDQEEEES) are compositionally biased toward acidic residues. The interval 326 to 353 (TDEEEEEFIEEEDQEEEESTEGKEEGHQ) is disordered.

As to quaternary structure, homodimer. Homooligomer and heterooligomer. Interacts with SUMO2, titin/TTN and GMEB1. Interacts with TRIM54 and probably with TRIM55 and TNNI3. Forms a ternary complex with RACK1 and PRKCE. Interacts with CKM. As to expression, muscle specific. Selectively expressed in heart and skeletal muscle. Also expressed in the iris.

The protein localises to the cytoplasm. It is found in the nucleus. The protein resides in the myofibril. It localises to the sarcomere. Its subcellular location is the m line. The protein localises to the z line. The enzyme catalyses S-ubiquitinyl-[E2 ubiquitin-conjugating enzyme]-L-cysteine + [acceptor protein]-L-lysine = [E2 ubiquitin-conjugating enzyme]-L-cysteine + N(6)-ubiquitinyl-[acceptor protein]-L-lysine.. The protein operates within protein modification; protein ubiquitination. Its function is as follows. E3 ubiquitin ligase. Mediates the ubiquitination and subsequent proteasomal degradation of CKM, GMEB1 and HIBADH. Regulates the proteasomal degradation of muscle proteins under amino acid starvation, where muscle protein is catabolized to provide other organs with amino acids. Inhibits de novo skeletal muscle protein synthesis under amino acid starvation. Regulates proteasomal degradation of cardiac troponin I/TNNI3 and probably of other sarcomeric-associated proteins. May play a role in striated muscle atrophy and hypertrophy by regulating an anti-hypertrophic PKC-mediated signaling pathway. May regulate the organization of myofibrils through TTN in muscle cells. This Homo sapiens (Human) protein is E3 ubiquitin-protein ligase TRIM63 (TRIM63).